Consider the following 635-residue polypeptide: MNATVSSAVQSSLPFSGKTAQVDEGTVKPLPRSQKTYLSGSRPDIRVPMREISQSDTPASMGAEKNPPIYVYDTSGPYTDPAIKIDIRAGLAPLREKWIDERGDTEILSGPASIYGRQRLNDPRLAELRFDLKRSPRRARAGANVTQMHYARGGIVTPEMEFIAIRENQRCEHLADQQREMLARQHPGQDFGAFLPRHITPEFVRDEVARGRAIIPANINHPESEPMIIGRNFLVKINANIGNSALSSSIQEEVEKMTWAIRWGGDTVMDLSTGKNIHETREWIIRNSPVPIGTVPIYQALEKVNGKAEDLTWEIFRDTLIEQAEQGVDYFTIHAGVRLAYVPMTAKRLTGIVSRGGSIMAKWCLAHHKESFLYTQFEEICEIMKAYDVSFSLGDGLRPGSIYDANDEAQFAELKTLGELTQIAWKHDVQVMIEGPGHVPMHLIKENMDMQLKYCAEAPFYTLGPLTTDIAPGYDHITSAIGAAMIGWYGTAMLCYVTPKEHLGLPDKDDVKDGIITYKIAAHAADLAKGHPGAQLRDNALSKARFEFRWEDQFNLGLDPDKARQFHDETLPQEGAKLAHFCSMCGPHFCSMKITQDVRDFAASKGVSDQEALEKGMEEKASEFVARGTEIYSKV.

The span at 1–14 shows a compositional bias: polar residues; it reads MNATVSSAVQSSLP. The disordered stretch occupies residues 1 to 41; it reads MNATVSSAVQSSLPFSGKTAQVDEGTVKPLPRSQKTYLSGS. Residues Asn-240, Met-269, Tyr-298, His-334, 354–356, 395–398, and Glu-434 each bind substrate; these read SRG and DGLR. His-438 is a binding site for Zn(2+). Tyr-461 provides a ligand contact to substrate. Residue His-502 participates in Zn(2+) binding. Residues Cys-582, Cys-585, and Cys-590 each contribute to the [4Fe-4S] cluster site.

The protein belongs to the ThiC family. As to quaternary structure, homodimer. It depends on [4Fe-4S] cluster as a cofactor.

It carries out the reaction 5-amino-1-(5-phospho-beta-D-ribosyl)imidazole + S-adenosyl-L-methionine = 4-amino-2-methyl-5-(phosphooxymethyl)pyrimidine + CO + 5'-deoxyadenosine + formate + L-methionine + 3 H(+). Its pathway is cofactor biosynthesis; thiamine diphosphate biosynthesis. Functionally, catalyzes the synthesis of the hydroxymethylpyrimidine phosphate (HMP-P) moiety of thiamine from aminoimidazole ribotide (AIR) in a radical S-adenosyl-L-methionine (SAM)-dependent reaction. The polypeptide is Phosphomethylpyrimidine synthase (Nitrosospira multiformis (strain ATCC 25196 / NCIMB 11849 / C 71)).